The primary structure comprises 275 residues: NH(3)-dependent NAD(+) synthetase (275 aa).

50–57 (GISGGVDS) is an ATP binding site. A Mg(2+)-binding site is contributed by aspartate 56. Arginine 147 contacts deamido-NAD(+). Threonine 167 contributes to the ATP binding site. Glutamate 172 is a binding site for Mg(2+). The deamido-NAD(+) site is built by lysine 180 and aspartate 187. 2 residues coordinate ATP: lysine 196 and threonine 218. Residue 267-268 (HK) participates in deamido-NAD(+) binding.

The protein belongs to the NAD synthetase family. In terms of assembly, homodimer.

It catalyses the reaction deamido-NAD(+) + NH4(+) + ATP = AMP + diphosphate + NAD(+) + H(+). Its pathway is cofactor biosynthesis; NAD(+) biosynthesis; NAD(+) from deamido-NAD(+) (ammonia route): step 1/1. Its function is as follows. Catalyzes the ATP-dependent amidation of deamido-NAD to form NAD. Uses ammonia as a nitrogen source. The protein is NH(3)-dependent NAD(+) synthetase of Stutzerimonas stutzeri (strain A1501) (Pseudomonas stutzeri).